Here is a 506-residue protein sequence, read N- to C-terminus: Anaerobic nitric oxide reductase transcription regulator NorR (506 aa).

Position 57 is a 4-aspartylphosphate (Asp57). The region spanning 187-416 (MIGLSPAMTQ…LEHAIHRAVV (230 aa)) is the Sigma-54 factor interaction domain. ATP-binding positions include 215–222 (GETGTGKE) and 278–287 (ADNGTLFLDE). The segment at residues 481 to 500 (WAASARALETDVANLHRLAK) is a DNA-binding region (H-T-H motif).

It participates in nitrogen metabolism; nitric oxide reduction. In terms of biological role, required for the expression of anaerobic nitric oxide (NO) reductase, acts as a transcriptional activator for at least the norVW operon. Activation also requires sigma-54. This chain is Anaerobic nitric oxide reductase transcription regulator NorR, found in Salmonella schwarzengrund (strain CVM19633).